Reading from the N-terminus, the 188-residue chain is Elongation factor P (188 aa).

Lysine 34 is subject to N6-(3,6-diaminohexanoyl)-5-hydroxylysine.

This sequence belongs to the elongation factor P family. Post-translationally, may be beta-lysylated on the epsilon-amino group of Lys-34 by the combined action of EpmA and EpmB, and then hydroxylated on the C5 position of the same residue by EpmC (if this protein is present). Lysylation is critical for the stimulatory effect of EF-P on peptide-bond formation. The lysylation moiety may extend toward the peptidyltransferase center and stabilize the terminal 3-CCA end of the tRNA. Hydroxylation of the C5 position on Lys-34 may allow additional potential stabilizing hydrogen-bond interactions with the P-tRNA.

It is found in the cytoplasm. Its pathway is protein biosynthesis; polypeptide chain elongation. In terms of biological role, involved in peptide bond synthesis. Alleviates ribosome stalling that occurs when 3 or more consecutive Pro residues or the sequence PPG is present in a protein, possibly by augmenting the peptidyl transferase activity of the ribosome. Modification of Lys-34 is required for alleviation. This chain is Elongation factor P, found in Stenotrophomonas maltophilia (strain R551-3).